The following is a 469-amino-acid chain: Protein POLLENLESS 3-LIKE 1 (469 aa).

The disordered stretch occupies residues 1–20; that stretch reads MRRRESRGAKGGGFLTPPPS. TPR repeat units lie at residues 88 to 121, 124 to 157, and 184 to 217; these read DSAL…CPFE, DSID…LEQD, and ARIL…EPDN. A coiled-coil region spans residues 139-191; sequence RITEVAELLEHKLRTLEQDKHYGGRIKIAKRSHEEQNNKTIEQEKARILGNLA. The span at 314–338 shows a compositional bias: polar residues; it reads NIHKTNSHASSESVEQNSPGLTTQP. The disordered stretch occupies residues 314–339; the sequence is NIHKTNSHASSESVEQNSPGLTTQPR.

Belongs to the MS5 protein family. As to expression, expressed in floral and vegetative organs. Also barely detectable in leaves and stems.

The protein resides in the nucleus. Functionally, probably involved in the regulation of cell division. This is Protein POLLENLESS 3-LIKE 1 from Arabidopsis thaliana (Mouse-ear cress).